Reading from the N-terminus, the 193-residue chain is Surfactant protein C (193 aa).

Residues 1 to 23 (MDMSSKEVLMESPPDYSAGPRSQ) constitute a propeptide that is removed on maturation. S-palmitoyl cysteine attachment occurs at residues cysteine 28 and cysteine 29. A propeptide spanning residues 59–193 (HMSQKHTEMV…LCGELPLYYI (135 aa)) is cleaved from the precursor. The region spanning 94-193 (FSIGSTGIVV…LCGELPLYYI (100 aa)) is the BRICHOS domain. A disulfide bond links cysteine 121 and cysteine 185. The segment at 147–170 (KPSTPTSKLGQEEGHDTGSESDSS) is disordered.

The protein resides in the secreted. The protein localises to the extracellular space. It is found in the surface film. Functionally, pulmonary surfactant associated proteins promote alveolar stability by lowering the surface tension at the air-liquid interface in the peripheral air spaces. The sequence is that of Surfactant protein C from Mus musculus (Mouse).